The following is a 279-amino-acid chain: Ethanolamine utilization protein EutJ (279 aa).

It belongs to the EutJ family.

The protein operates within amine and polyamine degradation; ethanolamine degradation. May protect ethanolamine ammonia-lyase (EAL, eutB-eutC) from inhibition, may function in assembling the bacterial microcompartment and/or in refolding EAL, suggesting it may have chaperone activity. Overexpression of eutJ and eutS in E.coli leads to multiple BMC-like structures; eutS expression alone leads to 1 BMC-like structure per cell. Functionally, expression of the eut operon allows this bacteria to use ethanolamine (EA) as a carbon, nitrogen and energy source. It relies on cobalamin (vitamin B12) both as a cofactor for the ethanolamine ammonia-lyase (EAL) activity and to induce the operon. EA enhances bacterial survival in macrophages in a concentration-dependent manner, suggesting it is an important nutrient during infection. In Salmonella typhimurium (strain LT2 / SGSC1412 / ATCC 700720), this protein is Ethanolamine utilization protein EutJ.